The primary structure comprises 359 residues: Peptide chain release factor 1 (359 aa).

Gln-235 is subject to N5-methylglutamine. A disordered region spans residues Ala-280–Ile-306.

It belongs to the prokaryotic/mitochondrial release factor family. In terms of processing, methylated by PrmC. Methylation increases the termination efficiency of RF1.

The protein resides in the cytoplasm. Its function is as follows. Peptide chain release factor 1 directs the termination of translation in response to the peptide chain termination codons UAG and UAA. This chain is Peptide chain release factor 1, found in Rhizobium johnstonii (strain DSM 114642 / LMG 32736 / 3841) (Rhizobium leguminosarum bv. viciae).